We begin with the raw amino-acid sequence, 170 residues long: MLLYLVNFQSMWANYVLELLKDAFAFKIKAKELDIPLAAYNPFRKQFSAQLLLDYVVERYKDGLVFAIIDEDIYDSNYNFVFGLAYPFRGAIVSTYRLKNFERIKKEVLHEMGHVFGLGHCNNYCVMRFSNSVFEVDEKPDKYCENCYREILNNGFYVNPKYVIFKENYN.

Histidine 110 contacts Zn(2+). Glutamate 111 (proton acceptor) is an active-site residue. Zn(2+) is bound by residues histidine 114, histidine 120, cysteine 121, cysteine 125, cysteine 144, and cysteine 147.

Belongs to the peptidase M54 family. As to quaternary structure, monomer. The cofactor is Zn(2+).

In terms of biological role, probable zinc metalloprotease whose natural substrate is unknown. The sequence is that of Archaemetzincin from Nanoarchaeum equitans (strain Kin4-M).